The sequence spans 283 residues: Glutamate racemase (283 aa).

Residues 28 to 29 (DS) and 60 to 61 (YG) contribute to the substrate site. Cys92 (proton donor/acceptor) is an active-site residue. 93 to 94 (NS) is a substrate binding site. Cys204 (proton donor/acceptor) is an active-site residue. Residue 205 to 206 (TH) participates in substrate binding.

The protein belongs to the aspartate/glutamate racemases family.

The enzyme catalyses L-glutamate = D-glutamate. It functions in the pathway cell wall biogenesis; peptidoglycan biosynthesis. Provides the (R)-glutamate required for cell wall biosynthesis. This is Glutamate racemase from Erwinia tasmaniensis (strain DSM 17950 / CFBP 7177 / CIP 109463 / NCPPB 4357 / Et1/99).